The primary structure comprises 73 residues: Disintegrin trigramin-beta-2 (73 aa).

In terms of domain architecture, Disintegrin spans 1–73 (EAGKDCDCGS…AGCPRNPFHA (73 aa)). Intrachain disulfides connect Cys6–Cys21, Cys8–Cys16, Cys15–Cys38, Cys29–Cys35, Cys34–Cys59, and Cys47–Cys66. Positions 51 to 53 (RGD) match the Cell attachment site motif.

This sequence belongs to the venom metalloproteinase (M12B) family. P-II subfamily. P-IIa sub-subfamily. In terms of assembly, monomer (disintegrin). As to expression, expressed by the venom gland.

Its subcellular location is the secreted. Its function is as follows. Inhibits fibrinogen interaction with platelets. Acts by binding to the alpha-IIb/beta-3 receptor (ITGA2B/ITGB3) on the platelet surface and inhibits aggregation induced by ADP, thrombin, platelet-activating factor and collagen. This Craspedocephalus gramineus (Bamboo pit viper) protein is Disintegrin trigramin-beta-2.